The following is a 167-amino-acid chain: Peptide deformylase (167 aa).

Fe cation-binding residues include C90 and H132. The active site involves E133. H136 contacts Fe cation.

It belongs to the polypeptide deformylase family. It depends on Fe(2+) as a cofactor.

It carries out the reaction N-terminal N-formyl-L-methionyl-[peptide] + H2O = N-terminal L-methionyl-[peptide] + formate. Removes the formyl group from the N-terminal Met of newly synthesized proteins. Requires at least a dipeptide for an efficient rate of reaction. N-terminal L-methionine is a prerequisite for activity but the enzyme has broad specificity at other positions. This chain is Peptide deformylase, found in Dehalococcoides mccartyi (strain ATCC BAA-2100 / JCM 16839 / KCTC 5957 / BAV1).